Reading from the N-terminus, the 287-residue chain is Phosphatidylserine decarboxylase proenzyme (287 aa).

Residues D89, H146, and S252 each act as charge relay system; for autoendoproteolytic cleavage activity in the active site. Catalysis depends on S252, which acts as the Schiff-base intermediate with substrate; via pyruvic acid; for decarboxylase activity. S252 bears the Pyruvic acid (Ser); by autocatalysis mark.

It belongs to the phosphatidylserine decarboxylase family. PSD-B subfamily. Prokaryotic type I sub-subfamily. Heterodimer of a large membrane-associated beta subunit and a small pyruvoyl-containing alpha subunit. Requires pyruvate as cofactor. Post-translationally, is synthesized initially as an inactive proenzyme. Formation of the active enzyme involves a self-maturation process in which the active site pyruvoyl group is generated from an internal serine residue via an autocatalytic post-translational modification. Two non-identical subunits are generated from the proenzyme in this reaction, and the pyruvate is formed at the N-terminus of the alpha chain, which is derived from the carboxyl end of the proenzyme. The autoendoproteolytic cleavage occurs by a canonical serine protease mechanism, in which the side chain hydroxyl group of the serine supplies its oxygen atom to form the C-terminus of the beta chain, while the remainder of the serine residue undergoes an oxidative deamination to produce ammonia and the pyruvoyl prosthetic group on the alpha chain. During this reaction, the Ser that is part of the protease active site of the proenzyme becomes the pyruvoyl prosthetic group, which constitutes an essential element of the active site of the mature decarboxylase.

Its subcellular location is the cell membrane. It catalyses the reaction a 1,2-diacyl-sn-glycero-3-phospho-L-serine + H(+) = a 1,2-diacyl-sn-glycero-3-phosphoethanolamine + CO2. It functions in the pathway phospholipid metabolism; phosphatidylethanolamine biosynthesis; phosphatidylethanolamine from CDP-diacylglycerol: step 2/2. Its function is as follows. Catalyzes the formation of phosphatidylethanolamine (PtdEtn) from phosphatidylserine (PtdSer). The sequence is that of Phosphatidylserine decarboxylase proenzyme from Shewanella sediminis (strain HAW-EB3).